Here is a 31-residue protein sequence, read N- to C-terminus: Cytochrome b6-f complex subunit 6 (31 aa).

The chain crosses the membrane as a helical span at residues 4–24 (ITSYFGFLLAVLIITSSLFIG).

It belongs to the PetL family. In terms of assembly, the 4 large subunits of the cytochrome b6-f complex are cytochrome b6, subunit IV (17 kDa polypeptide, PetD), cytochrome f and the Rieske protein, while the 4 small subunits are PetG, PetL, PetM and PetN. The complex functions as a dimer.

It is found in the plastid. It localises to the chloroplast thylakoid membrane. Component of the cytochrome b6-f complex, which mediates electron transfer between photosystem II (PSII) and photosystem I (PSI), cyclic electron flow around PSI, and state transitions. PetL is important for photoautotrophic growth as well as for electron transfer efficiency and stability of the cytochrome b6-f complex. The sequence is that of Cytochrome b6-f complex subunit 6 from Phaseolus vulgaris (Kidney bean).